We begin with the raw amino-acid sequence, 260 residues long: Hemin import ATP-binding protein HmuV (260 aa).

The ABC transporter domain maps to 6–242 (LSGRNISMKY…ERIEQVYGYR (237 aa)). 38–45 (GPNGAGKS) serves as a coordination point for ATP.

Belongs to the ABC transporter superfamily. Heme (hemin) importer (TC 3.A.1.14.5) family. As to quaternary structure, the complex is composed of two ATP-binding proteins (HmuV), two transmembrane proteins (HmuU) and a solute-binding protein (HmuT).

It is found in the cell inner membrane. Part of the ABC transporter complex HmuTUV involved in hemin import. Responsible for energy coupling to the transport system. This is Hemin import ATP-binding protein HmuV from Vibrio parahaemolyticus serotype O3:K6 (strain RIMD 2210633).